The primary structure comprises 405 residues: MRNINVQLSHWVDIDSLEVELVERKGTGHPDYIADSASEEASRKLSLYYLKRYGTILHHNLDKTLVVGGQASPRFKGGEVLQPIYIIVAGRATTEVKTESGIESIPVGTIIIESVKEWIKEHFRYLDPEKHVIVDYKIGKGSADLVGIFEVAKKSVPLSNDTSFGVGFAPYSKLENLVYQTERYLNSKEMKAKIPEIGEDIKVMGLRKGKTIELTIAMAVISQLVSDLNHYIAVKEEAKQAILDLASKLVPDYDVKVNINTGDKIDKGIVYLTVTGTSAEHGDDGMTGRGNRATGLITPMRPMSLEATAGKNPVNHVGKIYNIVANLIAQKVSTEVKGVKNVQVEVLGQIGRPIDDPLIANVQVTTENGSLTSEMKREIEGISDEILGSITKISDLILENKVMLF.

139-144 (GKGSAD) contributes to the ATP binding site.

It belongs to the AdoMet synthase 2 family. Mg(2+) is required as a cofactor.

The catalysed reaction is L-methionine + ATP + H2O = S-adenosyl-L-methionine + phosphate + diphosphate. It participates in amino-acid biosynthesis; S-adenosyl-L-methionine biosynthesis; S-adenosyl-L-methionine from L-methionine: step 1/1. Catalyzes the formation of S-adenosylmethionine from methionine and ATP. This chain is S-adenosylmethionine synthase, found in Sulfurisphaera tokodaii (strain DSM 16993 / JCM 10545 / NBRC 100140 / 7) (Sulfolobus tokodaii).